A 106-amino-acid chain; its full sequence is Iron-sulfur cluster assembly protein CyaY (106 aa).

This sequence belongs to the frataxin family.

In terms of biological role, involved in iron-sulfur (Fe-S) cluster assembly. May act as a regulator of Fe-S biogenesis. The sequence is that of Iron-sulfur cluster assembly protein CyaY from Yersinia enterocolitica serotype O:8 / biotype 1B (strain NCTC 13174 / 8081).